The primary structure comprises 519 residues: Cyclin-dependent kinase C-1 (519 aa).

The Protein kinase domain occupies 25–325; the sequence is FEKLEQIGEG…AQDALDAEYF (301 aa). ATP-binding positions include 31–39 and lysine 54; that span reads IGEGTYGQV. Threonine 35 carries the post-translational modification Phosphothreonine. Tyrosine 36 is subject to Phosphotyrosine. The active-site Proton acceptor is the aspartate 164. Threonine 198 bears the Phosphothreonine mark. A compositionally biased stretch (basic and acidic residues) spans 336–348; sequence SLPKYESSHEFQT. The segment at 336–519 is disordered; the sequence is SLPKYESSHE…RNQQQYGNWQ (184 aa). The span at 426-444 shows a compositional bias: gly residues; sequence GNQGGGYPNRGGQGGGGSY. Positions 445 to 454 are enriched in low complexity; sequence GNAPYPQQGR. Composition is skewed to gly residues over residues 464–483 and 490–499; these read GMAGTGGPRGGVGGGYGGGS and GPYGPSGPGR. Residues 505-519 are compositionally biased toward polar residues; sequence QQGGSRNQQQYGNWQ.

The protein belongs to the protein kinase superfamily. CMGC Ser/Thr protein kinase family. CDC2/CDKX subfamily.

It carries out the reaction L-seryl-[protein] + ATP = O-phospho-L-seryl-[protein] + ADP + H(+). It catalyses the reaction L-threonyl-[protein] + ATP = O-phospho-L-threonyl-[protein] + ADP + H(+). The catalysed reaction is [DNA-directed RNA polymerase] + ATP = phospho-[DNA-directed RNA polymerase] + ADP + H(+). In Oryza sativa subsp. japonica (Rice), this protein is Cyclin-dependent kinase C-1 (CDKC-1).